A 326-amino-acid polypeptide reads, in one-letter code: mRNA decay activator protein ZFP36 (326 aa).

Positions 1-15 (MDLTAIYESLLSLSP) are necessary for nuclear export. Residues 1-100 (MDLTAIYESL…PTSPTATSTT (100 aa)) form a necessary and sufficient for the association with mRNA decay enzymes and mRNA decay activation region. 2 necessary for localization of ARE-containing mRNAs to processing bodies (PBs) regions span residues 1-174 (MDLT…DLAA) and 100-326 (TPSR…SVSE). Residues 13–66 (LSPDVPVPSDHGGTESSPGWGSSGPWSLSPSDSSPSGVTSRLPGRSTSLVEGRS) are disordered. Positions 28–49 (SSPGWGSSGPWSLSPSDSSPSG) are enriched in low complexity. Serine 60 is modified (phosphoserine; by MAPKAPK2). Serine 66 is modified (phosphoserine). Residues 71 to 75 (PPPPG) form a P-P-P-P-G repeat. The disordered stretch occupies residues 78 to 102 (PLAPRLGPELSPSPTSPTATSTTPS). Serine 88 and serine 90 each carry phosphoserine. Phosphothreonine is present on threonine 92. Serine 93 is modified (phosphoserine). The interval 95-168 (TATSTTPSRY…GSRCHFIHNP (74 aa)) is necessary for nuclear localization. Positions 97–173 (TSTTPSRYKT…FIHNPSEDLA (77 aa)) are necessary for RNA-binding. 2 consecutive C3H1-type zinc fingers follow at residues 103-131 (RYKT…HGLG) and 141-169 (KYKT…HNPS). The segment at 103 to 194 (RYKTELCRTF…ISFSGLPSGR (92 aa)) is necessary for interaction with PABPN1. Serine 169 bears the Phosphoserine mark. A necessary for mRNA decay activation region spans residues 174 to 326 (APGHPPVLRQ…PIFNRISVSE (153 aa)). Disordered stretches follow at residues 175-245 (PGHP…RRDP) and 273-292 (SVQS…SSLG). A Phosphoserine; by MAPKAPK2 modification is found at serine 186. The residue at position 197 (serine 197) is a Phosphoserine. The P-P-P-P-G repeat unit spans residues 198-202 (PPPPG). Residues 204 to 216 (AGPSLSSSSFSPS) are compositionally biased toward low complexity. The residue at position 218 (serine 218) is a Phosphoserine. A P-P-P-P-G repeat occupies 219–223 (PPPPG). At serine 228 the chain carries Phosphoserine; by MAPK1; in vitro. Residues serine 276, serine 296, and serine 323 each carry the phosphoserine modification. The interaction with CNOT1 stretch occupies residues 312 to 326 (APRRLPIFNRISVSE).

In terms of assembly, associates with cytoplasmic CCR4-NOT and PAN2-PAN3 deadenylase complexes to trigger ARE-containing mRNA deadenylation and decay processes. Part of a mRNA decay activation complex at least composed of poly(A)-specific exoribonucleases CNOT6, EXOSC2 and XRN1 and mRNA-decapping enzymes DCP1A and DCP2. Associates with the RNA exosome complex. Interacts (via phosphorylated form) with 14-3-3 proteins; these interactions promote exclusion of ZFP36 from cytoplasmic stress granules in response to arsenite treatment in a MAPKAPK2-dependent manner and does not prevent CCR4-NOT deadenylase complex recruitment or ZFP36-induced ARE-containing mRNA deadenylation and decay processes. Interacts with 14-3-3 proteins; these interactions occur in response to rapamycin in an Akt-dependent manner. Interacts with AGO2 and AGO4. Interacts (via C-terminus) with CNOT1; this interaction occurs in a RNA-independent manner and induces mRNA deadenylation. Interacts (via N-terminus) with CNOT6. Interacts with CNOT6L. Interacts (via C-terminus) with CNOT7; this interaction occurs in a RNA-independent manner, induces mRNA deadenylation and is inhibited in a phosphorylation MAPKAPK2-dependent manner. Interacts (via unphosphorylated form) with CNOT8; this interaction occurs in a RNA-independent manner and is inhibited in a phosphorylation MAPKAPK2-dependent manner. Interacts with DCP1A. Interacts (via N-terminus) with DCP2. Interacts with EDC3. Interacts (via N-terminus) with EXOSC2. Interacts with heat shock 70 kDa proteins. Interacts with KHSRP; this interaction increases upon cytokine-induced treatment. Interacts with MAP3K4; this interaction enhances the association with SH3KBP1/CIN85. Interacts with MAPKAPK2; this interaction occurs upon skeletal muscle satellite cell activation. Interacts with NCL. Interacts with NUP214; this interaction increases upon lipopolysaccharide (LPS) stimulation. Interacts with PABPC1; this interaction occurs in a RNA-dependent manner. Interacts (via hypophosphorylated form) with PABPN1 (via RRM domain and C-terminal arginine-rich region); this interaction occurs in the nucleus in a RNA-independent manner, decreases in presence of single-stranded poly(A) RNA-oligomer and in a p38 MAPK-dependent-manner and inhibits nuclear poly(A) tail synthesis. Interacts with PAN2. Interacts (via C3H1-type zinc finger domains) with PKM. Interacts (via C3H1-type zinc finger domains) with nuclear RNA poly(A) polymerase. Interacts with PPP2CA; this interaction occurs in LPS-stimulated cells and induces ZFP36 dephosphorylation, and hence may promote ARE-containing mRNAs decay. Interacts (via C-terminus) with PRR5L (via C-terminus); this interaction may accelerate ZFP36-mediated mRNA decay during stress. Interacts (via C-terminus) with SFN; this interaction occurs in a phosphorylation-dependent manner. Interacts (via extreme C-terminal region) with SH3KBP1/CIN85 (via SH3 domains); this interaction enhances MAP3K4-induced phosphorylation of ZFP36 at Ser-66 and Ser-93 and does not alter neither ZFP36 binding to ARE-containing transcripts nor TNF-alpha mRNA decay. Interacts with XRN1. Interacts (via C-terminus and Ser-186 phosphorylated form) with YWHAB; this interaction occurs in a p38/MAPKAPK2-dependent manner, increases cytoplasmic localization of ZFP36 and protects ZFP36 from Ser-186 dephosphorylation by serine/threonine phosphatase 2A, and hence may be crucial for stabilizing ARE-containing mRNAs. Interacts (via phosphorylated form) with YWHAE. Interacts (via C-terminus) with YWHAG; this interaction occurs in a phosphorylation-dependent manner. Interacts with YWHAH; this interaction occurs in a phosphorylation-dependent manner. Interacts with YWHAQ; this interaction occurs in a phosphorylation-dependent manner. Interacts with (via C-terminus) YWHAZ; this interaction occurs in a phosphorylation-dependent manner. Interacts (via P-P-P-P-G repeats) with GIGYF2; the interaction is direct. (Microbial infection) Interacts (via C-terminus) with HTLV-1 TAX (via C-terminus); this interaction inhibits HTLV-1 TAX to transactivate viral long terminal repeat (LTR) promoter. Post-translationally, phosphorylated. Phosphorylation at serine and/or threonine residues occurs in a p38 MAPK- and MAPKAPK2-dependent manner. Phosphorylated by MAPKAPK2 at Ser-60 and Ser-186; phosphorylation increases its stability and cytoplasmic localization, promotes binding to 14-3-3 adapter proteins and inhibits the recruitment of cytoplasmic CCR4-NOT and PAN2-PAN3 deadenylase complexes to the mRNA decay machinery, thereby inhibiting ZFP36-induced ARE-containing mRNA deadenylation and decay processes. Phosphorylation by MAPKAPK2 does not impair ARE-containing RNA-binding. Phosphorylated in a MAPKAPK2- and p38 MAPK-dependent manner upon skeletal muscle satellite cell activation; this phosphorylation inhibits ZFP36-mediated mRNA decay activity, and hence stabilizes MYOD1 mRNA. Phosphorylated by MAPK1 upon mitogen stimulation. Phosphorylated at Ser-66 and Ser-93; these phosphorylations increase in a SH3KBP1-dependent manner. Phosphorylated at serine and threonine residues in a pyruvate kinase PKM- and p38 MAPK-dependent manner. Phosphorylation at Ser-60 may participate in the PKM-mediated degradation of ZFP36 in a p38 MAPK-dependent manner. Dephosphorylated by serine/threonine phosphatase 2A at Ser-186. In terms of processing, ubiquitinated; pyruvate kinase (PKM)-dependent ubiquitination leads to proteasomal degradation through a p38 MAPK signaling pathway. Expressed in both basal and suprabasal epidermal layers. Expressed in epidermal keratinocytes. Expressed strongly in mature dendritic cells. Expressed in immature dendritic cells (at protein level).

The protein resides in the nucleus. The protein localises to the cytoplasm. It is found in the cytoplasmic granule. Its subcellular location is the P-body. Zinc-finger RNA-binding protein that destabilizes several cytoplasmic AU-rich element (ARE)-containing mRNA transcripts by promoting their poly(A) tail removal or deadenylation, and hence provide a mechanism for attenuating protein synthesis. Acts as an 3'-untranslated region (UTR) ARE mRNA-binding adapter protein to communicate signaling events to the mRNA decay machinery. Recruits deadenylase CNOT7 (and probably the CCR4-NOT complex) via association with CNOT1, and hence promotes ARE-mediated mRNA deadenylation. Functions also by recruiting components of the cytoplasmic RNA decay machinery to the bound ARE-containing mRNAs. Self regulates by destabilizing its own mRNA. Binds to 3'-UTR ARE of numerous mRNAs and of its own mRNA. Plays a role in anti-inflammatory responses; suppresses tumor necrosis factor (TNF)-alpha production by stimulating ARE-mediated TNF-alpha mRNA decay and several other inflammatory ARE-containing mRNAs in interferon (IFN)- and/or lipopolysaccharide (LPS)-induced macrophages. Also plays a role in the regulation of dendritic cell maturation at the post-transcriptional level, and hence operates as part of a negative feedback loop to limit the inflammatory response. Promotes ARE-mediated mRNA decay of hypoxia-inducible factor HIF1A mRNA during the response of endothelial cells to hypoxia. Positively regulates early adipogenesis of preadipocytes by promoting ARE-mediated mRNA decay of immediate early genes (IEGs). Negatively regulates hematopoietic/erythroid cell differentiation by promoting ARE-mediated mRNA decay of the transcription factor STAT5B mRNA. Plays a role in maintaining skeletal muscle satellite cell quiescence by promoting ARE-mediated mRNA decay of the myogenic determination factor MYOD1 mRNA. Associates also with and regulates the expression of non-ARE-containing target mRNAs at the post-transcriptional level, such as MHC class I mRNAs. Participates in association with argonaute RISC catalytic components in the ARE-mediated mRNA decay mechanism; assists microRNA (miRNA) targeting ARE-containing mRNAs. May also play a role in the regulation of cytoplasmic mRNA decapping; enhances decapping of ARE-containing RNAs, in vitro. Involved in the delivery of target ARE-mRNAs to processing bodies (PBs). In addition to its cytosolic mRNA-decay function, affects nuclear pre-mRNA processing. Negatively regulates nuclear poly(A)-binding protein PABPN1-stimulated polyadenylation activity on ARE-containing pre-mRNA during LPS-stimulated macrophages. Also involved in the regulation of stress granule (SG) and P-body (PB) formation and fusion. Plays a role in the regulation of keratinocyte proliferation, differentiation and apoptosis. Plays a role as a tumor suppressor by inhibiting cell proliferation in breast cancer cells. Functionally, (Microbial infection) Negatively regulates HTLV-1 TAX-dependent transactivation of viral long terminal repeat (LTR) promoter. This is mRNA decay activator protein ZFP36 from Homo sapiens (Human).